Here is a 400-residue protein sequence, read N- to C-terminus: Argininosuccinate synthase (400 aa).

Residue 9–17 coordinates ATP; that stretch reads AYSGGLDTS. Tyr87 provides a ligand contact to L-citrulline. Residue Gly117 participates in ATP binding. L-aspartate is bound by residues Thr119, Asn123, and Asp124. Position 123 (Asn123) interacts with L-citrulline. 5 residues coordinate L-citrulline: Arg127, Ser176, Ser185, Glu261, and Tyr273.

Belongs to the argininosuccinate synthase family. Type 1 subfamily. As to quaternary structure, homotetramer.

The protein resides in the cytoplasm. The catalysed reaction is L-citrulline + L-aspartate + ATP = 2-(N(omega)-L-arginino)succinate + AMP + diphosphate + H(+). It participates in amino-acid biosynthesis; L-arginine biosynthesis; L-arginine from L-ornithine and carbamoyl phosphate: step 2/3. This is Argininosuccinate synthase from Chlorobium limicola (strain DSM 245 / NBRC 103803 / 6330).